Consider the following 170-residue polypeptide: Alpha-crystallin A chain (170 aa).

The residue at position 1 (Met-1) is an N-acetylmethionine. A required for complex formation with BFSP1 and BFSP2 region spans residues 1–63 (MDVTIQHPWF…RTALDSGISE (63 aa)). Deamidated glutamine; partial is present on Gln-6. Ser-45 bears the Phosphoserine mark. Gln-50 bears the Deamidated glutamine; partial mark. Positions 52-161 (LFRTALDSGI…GERTIPVSRE (110 aa)) constitute a sHSP domain. Lys-99 is modified (N6-acetyllysine). His-100 is a binding site for Zn(2+). A Deamidated asparagine; partial modification is found at Asn-101. Zn(2+) contacts are provided by Glu-102, His-107, and His-151. The interval 144 to 170 (PKLVDPSHGERTIPVSREEKPSSAPSS) is disordered. Residues 148–164 (DPSHGERTIPVSREEKP) show a composition bias toward basic and acidic residues. An O-linked (GlcNAc) serine glycan is attached at Ser-159.

Belongs to the small heat shock protein (HSP20) family. As to quaternary structure, heteromer composed of three CRYAA and one CRYAB subunits. Inter-subunit bridging via zinc ions enhances stability, which is crucial as there is no protein turn over in the lens. Can also form homodimers and homotetramers (dimers of dimers) which serve as the building blocks of homooligomers. Within homooligomers, the zinc-binding motif is created from residues of 3 different molecules. His-100 and Glu-102 from one molecule are ligands of the zinc ion, and His-107 and His-151 residues from additional molecules complete the site with tetrahedral coordination geometry. Part of a complex required for lens intermediate filament formation composed of BFSP1, BFSP2 and CRYAA. In terms of processing, acetylation at Lys-99 may increase chaperone activity. Undergoes age-dependent proteolytical cleavage at the C-terminus.

The protein localises to the cytoplasm. Its subcellular location is the nucleus. Functionally, contributes to the transparency and refractive index of the lens. Acts as a chaperone, preventing aggregation of various proteins under a wide range of stress conditions. Required for the correct formation of lens intermediate filaments as part of a complex composed of BFSP1, BFSP2 and CRYAA. This chain is Alpha-crystallin A chain (CRYAA), found in Tamandua mexicana (Northern Tamandua).